The primary structure comprises 144 residues: Bacilliredoxin SH1478 (144 aa).

Belongs to the bacilliredoxin family.

The protein is Bacilliredoxin SH1478 of Staphylococcus haemolyticus (strain JCSC1435).